Reading from the N-terminus, the 785-residue chain is Endonuclease MutS2 (785 aa).

331–338 (GPNTGGKT) is a binding site for ATP. The region spanning 710–785 (LDLRGLYADE…GLGVTVVELA (76 aa)) is the Smr domain.

The protein belongs to the DNA mismatch repair MutS family. MutS2 subfamily. As to quaternary structure, homodimer. Binds to stalled ribosomes, contacting rRNA.

In terms of biological role, endonuclease that is involved in the suppression of homologous recombination and thus may have a key role in the control of bacterial genetic diversity. Acts as a ribosome collision sensor, splitting the ribosome into its 2 subunits. Detects stalled/collided 70S ribosomes which it binds and splits by an ATP-hydrolysis driven conformational change. Acts upstream of the ribosome quality control system (RQC), a ribosome-associated complex that mediates the extraction of incompletely synthesized nascent chains from stalled ribosomes and their subsequent degradation. Probably generates substrates for RQC. The sequence is that of Endonuclease MutS2 from Pelotomaculum thermopropionicum (strain DSM 13744 / JCM 10971 / SI).